A 260-amino-acid chain; its full sequence is Phytolongin Phyl2.1 (260 aa).

Residues 12–114 form the Longin domain; that stretch reads CIAKGTVILA…LDNPTQHCLQ (103 aa). Residues 231–251 traverse the membrane as a helical; Anchor for type IV membrane protein segment; the sequence is WIVLMFDLCICLVLFGIWLWI.

It belongs to the synaptobrevin family.

It is found in the membrane. Functionally, non-SNARE longin protein involved in membrane-trafficking machinery. This is Phytolongin Phyl2.1 from Arabidopsis thaliana (Mouse-ear cress).